The sequence spans 667 residues: tRNA 5-methylaminomethyl-2-thiouridine biosynthesis bifunctional protein MnmC (667 aa).

Positions 1-12 are enriched in polar residues; the sequence is MSKQQAPNTTGI. The tract at residues 1-20 is disordered; the sequence is MSKQQAPNTTGIGTADLQWH. A tRNA (mnm(5)s(2)U34)-methyltransferase region spans residues 1 to 240; it reads MSKQQAPNTT…KRECLRGVLE (240 aa). The tract at residues 268 to 667 is FAD-dependent cmnm(5)s(2)U34 oxidoreductase; sequence IGAGIAGAAC…LVRSLKKPPL (400 aa).

The protein in the N-terminal section; belongs to the methyltransferase superfamily. tRNA (mnm(5)s(2)U34)-methyltransferase family. In the C-terminal section; belongs to the DAO family. The cofactor is FAD.

The protein resides in the cytoplasm. It carries out the reaction 5-aminomethyl-2-thiouridine(34) in tRNA + S-adenosyl-L-methionine = 5-methylaminomethyl-2-thiouridine(34) in tRNA + S-adenosyl-L-homocysteine + H(+). In terms of biological role, catalyzes the last two steps in the biosynthesis of 5-methylaminomethyl-2-thiouridine (mnm(5)s(2)U) at the wobble position (U34) in tRNA. Catalyzes the FAD-dependent demodification of cmnm(5)s(2)U34 to nm(5)s(2)U34, followed by the transfer of a methyl group from S-adenosyl-L-methionine to nm(5)s(2)U34, to form mnm(5)s(2)U34. The chain is tRNA 5-methylaminomethyl-2-thiouridine biosynthesis bifunctional protein MnmC from Magnetococcus marinus (strain ATCC BAA-1437 / JCM 17883 / MC-1).